Consider the following 472-residue polypeptide: Protein nucleotidyltransferase YdiU (472 aa).

Residues G86, G88, R89, K109, D121, G122, R172, and R179 each contribute to the ATP site. Catalysis depends on D244, which acts as the Proton acceptor. Residues N245 and D254 each coordinate Mg(2+). ATP is bound at residue D254.

This sequence belongs to the SELO family. It depends on Mg(2+) as a cofactor. Mn(2+) serves as cofactor.

The enzyme catalyses L-seryl-[protein] + ATP = 3-O-(5'-adenylyl)-L-seryl-[protein] + diphosphate. It catalyses the reaction L-threonyl-[protein] + ATP = 3-O-(5'-adenylyl)-L-threonyl-[protein] + diphosphate. The catalysed reaction is L-tyrosyl-[protein] + ATP = O-(5'-adenylyl)-L-tyrosyl-[protein] + diphosphate. It carries out the reaction L-histidyl-[protein] + UTP = N(tele)-(5'-uridylyl)-L-histidyl-[protein] + diphosphate. The enzyme catalyses L-seryl-[protein] + UTP = O-(5'-uridylyl)-L-seryl-[protein] + diphosphate. It catalyses the reaction L-tyrosyl-[protein] + UTP = O-(5'-uridylyl)-L-tyrosyl-[protein] + diphosphate. Its function is as follows. Nucleotidyltransferase involved in the post-translational modification of proteins. It can catalyze the addition of adenosine monophosphate (AMP) or uridine monophosphate (UMP) to a protein, resulting in modifications known as AMPylation and UMPylation. This is Protein nucleotidyltransferase YdiU from Ruegeria pomeroyi (strain ATCC 700808 / DSM 15171 / DSS-3) (Silicibacter pomeroyi).